Here is a 241-residue protein sequence, read N- to C-terminus: Aliphatic sulfonates import ATP-binding protein SsuB (241 aa).

Residues 10-226 enclose the ABC transporter domain; the sequence is VHLHGFSRSF…RPDHPAFMQL (217 aa). 42-49 is an ATP binding site; the sequence is GESGSGKT.

It belongs to the ABC transporter superfamily. Aliphatic sulfonates importer (TC 3.A.1.17.2) family. In terms of assembly, the complex is composed of two ATP-binding proteins (SsuB), two transmembrane proteins (SsuC) and a solute-binding protein (SsuA).

It is found in the cell inner membrane. It catalyses the reaction ATP + H2O + aliphatic sulfonate-[sulfonate-binding protein]Side 1 = ADP + phosphate + aliphatic sulfonateSide 2 + [sulfonate-binding protein]Side 1.. In terms of biological role, part of the ABC transporter complex SsuABC involved in aliphatic sulfonates import. Responsible for energy coupling to the transport system. The sequence is that of Aliphatic sulfonates import ATP-binding protein SsuB from Delftia acidovorans (Pseudomonas acidovorans).